The sequence spans 509 residues: Maturase K (509 aa).

It belongs to the intron maturase 2 family. MatK subfamily.

Its subcellular location is the plastid. It is found in the chloroplast. Usually encoded in the trnK tRNA gene intron. Probably assists in splicing its own and other chloroplast group II introns. This is Maturase K from Nicotiana plumbaginifolia (Leadwort-leaved tobacco).